The primary structure comprises 625 residues: Phosphomethylpyrimidine synthase (625 aa).

Residues Asn230, Met259, Tyr288, His324, 344 to 346 (SRG), 385 to 388 (DGLR), and Glu424 contribute to the substrate site. His428 lines the Zn(2+) pocket. Tyr451 lines the substrate pocket. Residue His492 participates in Zn(2+) binding. The [4Fe-4S] cluster site is built by Cys572, Cys575, and Cys580.

This sequence belongs to the ThiC family. As to quaternary structure, homodimer. [4Fe-4S] cluster serves as cofactor.

The catalysed reaction is 5-amino-1-(5-phospho-beta-D-ribosyl)imidazole + S-adenosyl-L-methionine = 4-amino-2-methyl-5-(phosphooxymethyl)pyrimidine + CO + 5'-deoxyadenosine + formate + L-methionine + 3 H(+). It participates in cofactor biosynthesis; thiamine diphosphate biosynthesis. Its function is as follows. Catalyzes the synthesis of the hydroxymethylpyrimidine phosphate (HMP-P) moiety of thiamine from aminoimidazole ribotide (AIR) in a radical S-adenosyl-L-methionine (SAM)-dependent reaction. In Xanthomonas campestris pv. campestris (strain 8004), this protein is Phosphomethylpyrimidine synthase.